Consider the following 390-residue polypeptide: Matrix metalloproteinase-23 (390 aa).

Residues 1-19 (MGRGARVPSEAPGAGVERR) lie on the Cytoplasmic side of the membrane. Residues 1–78 (MGRGARVPSE…PGPLAPRRRR (78 aa)) constitute a propeptide that is removed on maturation. Residues 20–40 (WLGAALVALCLLPALVLLARL) form a helical; Signal-anchor for type II membrane protein membrane-spanning segment. The Lumenal segment spans residues 41–390 (GAPAVPAWSA…TYSWRVRVRG (350 aa)). N-linked (GlcNAc...) asparagine glycans are attached at residues Asn-92 and Asn-148. His-211 is a Zn(2+) binding site. Residue Glu-212 is part of the active site. Zn(2+) is bound by residues His-215 and His-221. Asn-232 carries an N-linked (GlcNAc...) asparagine glycan. In terms of domain architecture, ShKT spans 255-289 (CLDRLFVCASWARRGFCDARRRLMKRLCPSSCDFC). Intrachain disulfides connect Cys-255–Cys-289, Cys-262–Cys-282, and Cys-271–Cys-286. The Ig-like C2-type domain maps to 295 to 380 (PTVATTPPPP…VVRRQQRVLT (86 aa)). N-linked (GlcNAc...) asparagine glycosylation is present at Asn-316. A disulfide bond links Cys-321 and Cys-370.

Belongs to the peptidase M10A family. Zn(2+) serves as cofactor. N-glycosylated. In terms of processing, proteolytic cleavage might yield an active form. In terms of tissue distribution, predominantly expressed in ovary, testis and prostate.

It localises to the endoplasmic reticulum membrane. Its subcellular location is the membrane. With respect to regulation, inhibited by TIMP2. Functionally, protease. May regulate the surface expression of some potassium channels by retaining them in the endoplasmic reticulum. This is Matrix metalloproteinase-23 (MMP23B) from Homo sapiens (Human).